A 222-amino-acid polypeptide reads, in one-letter code: Peptide methionine sulfoxide reductase MsrA (222 aa).

Residue cysteine 60 is part of the active site.

It belongs to the MsrA Met sulfoxide reductase family.

The catalysed reaction is L-methionyl-[protein] + [thioredoxin]-disulfide + H2O = L-methionyl-(S)-S-oxide-[protein] + [thioredoxin]-dithiol. It catalyses the reaction [thioredoxin]-disulfide + L-methionine + H2O = L-methionine (S)-S-oxide + [thioredoxin]-dithiol. Has an important function as a repair enzyme for proteins that have been inactivated by oxidation. Catalyzes the reversible oxidation-reduction of methionine sulfoxide in proteins to methionine. This Pseudomonas putida (strain GB-1) protein is Peptide methionine sulfoxide reductase MsrA.